Here is a 602-residue protein sequence, read N- to C-terminus: MTDAPVSRIRNFCIIAHIDHGKSTLADRLLQDTGTVANRDMQEQFLDNMELERERGITIKLQAARMNYTAADGEQYVLNLIDTPGHVDFSYEVSRSLLACEGALLVVDASQGVEAQTLANVYLALENDLEIIPVLNKIDLPGADPDRIKEEVEAIIGLDCSNAIYCSAKTGLGVPEILQAVVDRVPAPADAVEEPTKALIFDSYYDPYRGVIVYFRVMSGRISCKDKVLLMASKKTYELDEIGIMAPNERKVEELHAGEVGYLAASIKAVADARVGDTITLFNAPADEELPGYAEAKPMVFCGLFPTEADQYPDLREALHKLQLSDAALKFEPETSSAMGFGFRCGFLGLLHMEIVQERLEREYDLDLIVTAPSVIYNVNMVDGSEELVDNPATLPDPQKRESIEEPYVRMEIFAPNDYNGALMGLCQERRGEYIDMKYITKDRVTLIYELPLAEVVTDFFDQMKTRTQGYASMEYHLIGYRKNQLVRLDVLINGDRADPLTTIVHQDKAYNVGKALVDKLKELIPRQQFKIPLQASIGSRIIASTSISAIRKDVLAKCYGGDISRKKKLLKKQAKGKKRMKAMGKVDVPQEAFMAVLKLND.

Residues 7–189 enclose the tr-type G domain; sequence SRIRNFCIIA…AVVDRVPAPA (183 aa). GTP contacts are provided by residues 19–24 and 136–139; these read DHGKST and NKID.

The protein belongs to the TRAFAC class translation factor GTPase superfamily. Classic translation factor GTPase family. LepA subfamily.

It localises to the cell inner membrane. The enzyme catalyses GTP + H2O = GDP + phosphate + H(+). Required for accurate and efficient protein synthesis under certain stress conditions. May act as a fidelity factor of the translation reaction, by catalyzing a one-codon backward translocation of tRNAs on improperly translocated ribosomes. Back-translocation proceeds from a post-translocation (POST) complex to a pre-translocation (PRE) complex, thus giving elongation factor G a second chance to translocate the tRNAs correctly. Binds to ribosomes in a GTP-dependent manner. The protein is Elongation factor 4 of Synechococcus sp. (strain CC9902).